Consider the following 1064-residue polypeptide: Alpha-aminoadipic semialdehyde synthase (1064 aa).

The lysine-ketoglutarate reductase stretch occupies residues 24–445 (VNKWERRTPL…RACISYRGEL (422 aa)). T238 is modified (phosphothreonine). S458 carries the phosphoserine modification. A saccharopine dehydrogenase region spans residues 583–1064 (MTKKSGVLIL…YGIKLMEKAE (482 aa)). Residues 703–704 (SY), D730, R830, and 852–854 (TLR) contribute to the L-saccharopine site. Residue 729–731 (LDP) coordinates NADP(+).

It in the N-terminal section; belongs to the AlaDH/PNT family. In the C-terminal section; belongs to the saccharopine dehydrogenase family. Homodimer. Post-translationally, phosphorylation of Ser-458 seems important for the LKR activity. As to expression, ubiquitous, with higher levels in flowers. Isoform Long is mostly present in young leaves, cotyledons, root tips and mature root parts. Whereas isoform Short is mostly expressed in cotyledons and at low levels in all root parts.

The protein resides in the cytoplasm. The enzyme catalyses L-saccharopine + NADP(+) + H2O = L-lysine + 2-oxoglutarate + NADPH + H(+). It catalyses the reaction L-saccharopine + NAD(+) + H2O = (S)-2-amino-6-oxohexanoate + L-glutamate + NADH + H(+). It participates in amino-acid degradation; L-lysine degradation via saccharopine pathway; glutaryl-CoA from L-lysine: step 1/6. Its pathway is amino-acid degradation; L-lysine degradation via saccharopine pathway; glutaryl-CoA from L-lysine: step 2/6. With respect to regulation, the LKR activity is stimulated by NaCl. In terms of biological role, bifunctional enzyme that catalyzes the first two steps in lysine degradation. The N-terminal and the C-terminal contain lysine-oxoglutarate reductase and saccharopine dehydrogenase activity, respectively. Negatively regulates free Lys accumulation in seeds. This is Alpha-aminoadipic semialdehyde synthase (LKR/SDH) from Arabidopsis thaliana (Mouse-ear cress).